Consider the following 597-residue polypeptide: Putative lipase ATG15 (597 aa).

The Cytoplasmic portion of the chain corresponds to 1-15; it reads MTLEKNRHANKGTSW. A helical; Signal-anchor for type II membrane protein membrane pass occupies residues 16-36; it reads TWMIYKFVVGVITVAILVLFI. Residues 37-597 are Lumenal-facing; sequence TQKSVSQAQD…DDDEDTFERK (561 aa). Asn195, Asn262, and Asn346 each carry an N-linked (GlcNAc...) asparagine glycan. The active-site Charge relay system is the Ser364. The N-linked (GlcNAc...) asparagine glycan is linked to Asn481. The tract at residues 507 to 570 is disordered; that stretch reads EKDEPKLPNP…PTDQDPPKKC (64 aa). Residues 519–554 are compositionally biased toward low complexity; that stretch reads SSSKSTLSTKTTSLKSSSTYSGSTSSSTVTKTTQTS.

This sequence belongs to the AB hydrolase superfamily. Lipase family. In terms of assembly, binds to both phosphatidylinositol (PI) and phosphatidylinositol 3,5-bisphosphate (PIP2).

Its subcellular location is the endosome. It localises to the multivesicular body membrane. The protein localises to the prevacuolar compartment membrane. It carries out the reaction a triacylglycerol + H2O = a diacylglycerol + a fatty acid + H(+). Lipase which is essential for lysis of subvacuolar cytoplasm to vacuole targeted bodies and intravacuolar autophagic bodies. Involved in the lysis of intravacuolar multivesicular body (MVB) vesicles. The intravacuolar membrane disintegration by ATG15 is critical to life span extension. This chain is Putative lipase ATG15 (ATG15), found in Candida albicans (strain SC5314 / ATCC MYA-2876) (Yeast).